A 144-amino-acid polypeptide reads, in one-letter code: Intraflagellar transport protein 25 homolog (144 aa).

Residues Asn29, Asp32, and Thr37 each contribute to the Ca(2+) site.

It belongs to the IFT25 family. Component of the IFT complex B, at least composed of IFT20, IFT22, IFT25, IFT27, IFT46, IFT52, TRAF3IP1/IFT54, IFT57, IFT74, IFT80, IFT81, and IFT88. Interacts with IFT27. Interacts with IFT88. As to expression, detected in placenta.

It is found in the cell projection. The protein localises to the cilium. Its function is as follows. Component of the IFT complex B required for sonic hedgehog/SHH signaling. May mediate transport of SHH components: required for the export of SMO and PTCH1 receptors out of the cilium and the accumulation of GLI2 at the ciliary tip in response to activation of the SHH pathway, suggesting it is involved in the dynamic transport of SHH signaling molecules within the cilium. Not required for ciliary assembly. Its role in intraflagellar transport is mainly seen in tissues rich in ciliated cells such as kidney and testis. Essential for male fertility, spermiogenesis and sperm flagella formation. Plays a role in the early development of the kidney. May be involved in the regulation of ureteric bud initiation. The polypeptide is Intraflagellar transport protein 25 homolog (Homo sapiens (Human)).